The sequence spans 234 residues: Endonuclease V (234 aa).

Mg(2+) contacts are provided by Asp36 and Asp104.

The protein belongs to the endonuclease V family. Requires Mg(2+) as cofactor.

Its subcellular location is the cytoplasm. The enzyme catalyses Endonucleolytic cleavage at apurinic or apyrimidinic sites to products with a 5'-phosphate.. Functionally, DNA repair enzyme involved in the repair of deaminated bases. Selectively cleaves double-stranded DNA at the second phosphodiester bond 3' to a deoxyinosine leaving behind the intact lesion on the nicked DNA. The polypeptide is Endonuclease V (Yersinia enterocolitica serotype O:8 / biotype 1B (strain NCTC 13174 / 8081)).